The primary structure comprises 576 residues: Protein O-linked-mannose beta-1,4-N-acetylglucosaminyltransferase 2 (576 aa).

Residues 1–4 (MNIS) lie on the Cytoplasmic side of the membrane. Residues 5 to 25 (AVFNALLVSIMAAVLWKHVKL) traverse the membrane as a helical; Signal-anchor for type II membrane protein segment. Over 26 to 576 (LEQFYVIEEE…PFAEVLVCNT (551 aa)) the chain is Lumenal. N-linked (GlcNAc...) asparagine glycosylation is found at Asn98, Asn275, Asn335, Asn451, Asn539, and Asn561. Residues 482–576 (RESKCQASAQ…PFAEVLVCNT (95 aa)) form the Fibronectin type-III domain.

It belongs to the glycosyltransferase 61 family.

It is found in the endoplasmic reticulum membrane. It carries out the reaction 3-O-(alpha-D-mannosyl)-L-threonyl-[protein] + UDP-N-acetyl-alpha-D-glucosamine = 3-O-(N-acetyl-beta-D-glucosaminyl-(1-&gt;4)-alpha-D-mannosyl)-L-threonyl-[protein] + UDP + H(+). It functions in the pathway protein modification; protein glycosylation. Functionally, O-linked mannose beta-1,4-N-acetylglucosaminyltransferase that transfers UDP-N-acetyl-D-glucosamine to the 4-position of the mannose to generate N-acetyl-D-glucosamine-beta-1,4-O-D-mannosylprotein. Involved in the biosynthesis of the phosphorylated O-mannosyl trisaccharide (N-acetylgalactosamine-beta-3-N-acetylglucosamine-beta-4-(phosphate-6-)mannose), a carbohydrate structure present in alpha-dystroglycan (DAG1), which is required for binding laminin G-like domain-containing extracellular proteins with high affinity. In Xenopus tropicalis (Western clawed frog), this protein is Protein O-linked-mannose beta-1,4-N-acetylglucosaminyltransferase 2 (pomgnt2).